The following is a 1172-amino-acid chain: DNA-directed RNA polymerases IV and V subunit 2 (1172 aa).

Position 786 (Asp-786) interacts with Mg(2+). Cys-1108, Cys-1111, Cys-1133, and Cys-1136 together coordinate Zn(2+). The C4-type zinc-finger motif lies at Cys-1108–Cys-1136.

It belongs to the RNA polymerase beta chain family. Component of the RNA polymerase IV and V complexes. Interacts with SSH1, NRPD1 and NRPE1. In terms of tissue distribution, mostly expressed in seedlings, flowers and roots, present ubiquitously, except in sperm cells.

It is found in the nucleus. The catalysed reaction is RNA(n) + a ribonucleoside 5'-triphosphate = RNA(n+1) + diphosphate. In terms of biological role, DNA-dependent RNA polymerase catalyzes the transcription of DNA into RNA using the four ribonucleoside triphosphates as substrates. Second largest component of RNA polymerases IV and V which mediate short-interfering RNAs (siRNA) accumulation and subsequent RNA-directed DNA methylation-dependent (RdDM) transcriptional gene silencing (TGS) of endogenous repeated sequences, including transposable elements. Proposed to contribute to the polymerase catalytic activity and forms the polymerase active center together with the largest subunit. Also required for full erasure of methylation when the RNA trigger is withdrawn. Required for intercellular RNA interference (RNAi) leading to systemic post-transcriptional gene silencing. Involved in the maintenance of post-transcriptional RNA silencing. During interphase, mediates siRNA-independent heterochromatin association and methylation into chromocenters and condensation and cytosine methylation at pericentromeric major repeats. Required for complete maintenance of the 35S promoter homology-dependent TGS in transgenic plants and for the initial establishment of DNA methylation. The polypeptide is DNA-directed RNA polymerases IV and V subunit 2 (NRPD2) (Arabidopsis thaliana (Mouse-ear cress)).